The sequence spans 212 residues: Glycerol-3-phosphate acyltransferase (212 aa).

Helical transmembrane passes span 3–23, 70–90, 110–130, 143–163, and 164–184; these read IIIM…LWIG, IPII…FAII, AGVL…IFLL, ITVA…GFIL, and TDYD…IIIR.

The protein belongs to the PlsY family. As to quaternary structure, probably interacts with PlsX.

It is found in the cell membrane. It catalyses the reaction an acyl phosphate + sn-glycerol 3-phosphate = a 1-acyl-sn-glycero-3-phosphate + phosphate. It functions in the pathway lipid metabolism; phospholipid metabolism. In terms of biological role, catalyzes the transfer of an acyl group from acyl-phosphate (acyl-PO(4)) to glycerol-3-phosphate (G3P) to form lysophosphatidic acid (LPA). This enzyme utilizes acyl-phosphate as fatty acyl donor, but not acyl-CoA or acyl-ACP. This chain is Glycerol-3-phosphate acyltransferase, found in Streptococcus agalactiae serotype III (strain NEM316).